Consider the following 338-residue polypeptide: UDP-glucose 4-epimerase (338 aa).

Residues 11–12, 31–36, 58–59, 80–84, asparagine 99, serine 124, tyrosine 149, lysine 153, and phenylalanine 178 each bind NAD(+); these read YI, DNLCNS, DI, and FAGLK. Residues serine 124 and tyrosine 149 each coordinate substrate. Tyrosine 149 (proton acceptor) is an active-site residue. Substrate contacts are provided by residues asparagine 179, 199–200, 216–218, arginine 231, 292–295, and tyrosine 299; these read NL, AVF, and RDGD.

The protein belongs to the NAD(P)-dependent epimerase/dehydratase family. Homodimer. It depends on NAD(+) as a cofactor.

The enzyme catalyses UDP-alpha-D-glucose = UDP-alpha-D-galactose. The protein operates within carbohydrate metabolism; galactose metabolism. Involved in the metabolism of galactose. Catalyzes the conversion of UDP-galactose (UDP-Gal) to UDP-glucose (UDP-Glc) through a mechanism involving the transient reduction of NAD. The sequence is that of UDP-glucose 4-epimerase (galE) from Salmonella typhimurium (strain LT2 / SGSC1412 / ATCC 700720).